The following is a 143-amino-acid chain: Large-conductance mechanosensitive channel (143 aa).

Transmembrane regions (helical) follow at residues 10–30 and 89–109; these read FAVKGNVMDLAIGVIIGGAFS and GSFITVLINFIILAFIIFLMV.

Belongs to the MscL family. As to quaternary structure, homopentamer.

It localises to the cell inner membrane. Its function is as follows. Channel that opens in response to stretch forces in the membrane lipid bilayer. May participate in the regulation of osmotic pressure changes within the cell. The sequence is that of Large-conductance mechanosensitive channel from Burkholderia pseudomallei (strain 668).